The following is a 95-amino-acid chain: YcgL domain-containing protein APJL_0712 (95 aa).

The region spanning His4–Leu88 is the YcgL domain.

This chain is YcgL domain-containing protein APJL_0712, found in Actinobacillus pleuropneumoniae serotype 3 (strain JL03).